The sequence spans 231 residues: Small ribosomal subunit protein uS3 (231 aa).

The KH type-2 domain maps to 39-107; sequence IRELLHKELK…DVVINIVEIR (69 aa).

The protein belongs to the universal ribosomal protein uS3 family. Part of the 30S ribosomal subunit. Forms a tight complex with proteins S10 and S14.

Its function is as follows. Binds the lower part of the 30S subunit head. Binds mRNA in the 70S ribosome, positioning it for translation. In Nitrobacter hamburgensis (strain DSM 10229 / NCIMB 13809 / X14), this protein is Small ribosomal subunit protein uS3.